A 122-amino-acid polypeptide reads, in one-letter code: MSTLSRKQKTQKRHKRLRRNLSGTDQRPRLAVFRSNNHIYAQVIDDVAQNTLCAASTLEKEFLSNSKVNASTCAASTAVGEMLAKRALGKGIKQVVFDRGGSLYHGRVKALAEAARQAGLTF.

Residues 1-19 (MSTLSRKQKTQKRHKRLRR) show a composition bias toward basic residues. Residues 1-26 (MSTLSRKQKTQKRHKRLRRNLSGTDQ) are disordered.

Belongs to the universal ribosomal protein uL18 family. Part of the 50S ribosomal subunit; part of the 5S rRNA/L5/L18/L25 subcomplex. Contacts the 5S and 23S rRNAs.

Its function is as follows. This is one of the proteins that bind and probably mediate the attachment of the 5S RNA into the large ribosomal subunit, where it forms part of the central protuberance. The chain is Large ribosomal subunit protein uL18 from Prochlorococcus marinus (strain SARG / CCMP1375 / SS120).